The sequence spans 194 residues: Protein GrpE 1 (194 aa).

The segment at 1 to 22 (MIHNEEEQLEKKIEKNQDPKIN) is disordered.

It belongs to the GrpE family. As to quaternary structure, homodimer.

It localises to the cytoplasm. In terms of biological role, participates actively in the response to hyperosmotic and heat shock by preventing the aggregation of stress-denatured proteins, in association with DnaK and GrpE. It is the nucleotide exchange factor for DnaK and may function as a thermosensor. Unfolded proteins bind initially to DnaJ; upon interaction with the DnaJ-bound protein, DnaK hydrolyzes its bound ATP, resulting in the formation of a stable complex. GrpE releases ADP from DnaK; ATP binding to DnaK triggers the release of the substrate protein, thus completing the reaction cycle. Several rounds of ATP-dependent interactions between DnaJ, DnaK and GrpE are required for fully efficient folding. The polypeptide is Protein GrpE 1 (Buchnera aphidicola subsp. Acyrthosiphon pisum (strain APS) (Acyrthosiphon pisum symbiotic bacterium)).